We begin with the raw amino-acid sequence, 362 residues long: Phenylalanine--tRNA ligase alpha subunit (362 aa).

Glu263 contacts Mg(2+).

Belongs to the class-II aminoacyl-tRNA synthetase family. Phe-tRNA synthetase alpha subunit type 1 subfamily. In terms of assembly, tetramer of two alpha and two beta subunits. It depends on Mg(2+) as a cofactor.

The protein localises to the cytoplasm. The enzyme catalyses tRNA(Phe) + L-phenylalanine + ATP = L-phenylalanyl-tRNA(Phe) + AMP + diphosphate + H(+). The protein is Phenylalanine--tRNA ligase alpha subunit of Caulobacter sp. (strain K31).